Reading from the N-terminus, the 218-residue chain is MEWSQIFHDITTKHDFKAMHDFLEKEYSTAIVYPDRENIYQAFDLTPFENIKVVILGQDPYHGPNQAHGLAFSVQPNAKFPPSLRNMYKELADDIGCVRQTPHLQDWAREGVLLLNTVLTVRQGEANSHRDIGWETFTDEIIKAVSDYKEHVVFILWGKPAQQKIKLIDTSKHCIIKSVHPSPLSAYRGFFGSKPYSKANTYLESVGKSPINWCESEA.

Aspartate 59 acts as the Proton acceptor in catalysis.

The protein belongs to the uracil-DNA glycosylase (UDG) superfamily. UNG family.

The protein localises to the cytoplasm. It carries out the reaction Hydrolyzes single-stranded DNA or mismatched double-stranded DNA and polynucleotides, releasing free uracil.. In terms of biological role, excises uracil residues from the DNA which can arise as a result of misincorporation of dUMP residues by DNA polymerase or due to deamination of cytosine. This is Uracil-DNA glycosylase from Staphylococcus aureus (strain bovine RF122 / ET3-1).